The chain runs to 287 residues: Protein-export membrane protein SecF (287 aa).

6 helical membrane-spanning segments follow: residues 21 to 41, 129 to 149, 158 to 178, 182 to 202, 226 to 246, and 259 to 279; these read LIAI…FNGL, QIYW…FIIF, VILA…LFGI, LASV…DILL, VTMS…TVFV, and VLII…LGIL.

It belongs to the SecD/SecF family. SecF subfamily. In terms of assembly, part of the protein translocation apparatus. Forms a complex with SecD.

The protein resides in the cell membrane. Functionally, involved in protein export. The chain is Protein-export membrane protein SecF from Methanothermobacter thermautotrophicus (strain ATCC 29096 / DSM 1053 / JCM 10044 / NBRC 100330 / Delta H) (Methanobacterium thermoautotrophicum).